The chain runs to 701 residues: Polyribonucleotide nucleotidyltransferase (701 aa).

Residues D487 and D493 each coordinate Mg(2+). The KH domain maps to 554-613 (PTMIAMKIDTDKIRDVIGKGGATIRAICEETKASIDIEDDGSIKIFGESKEAAEAARQRV). Positions 623-691 (GKIYIGKVER…NRGRIKLSIK (69 aa)) constitute an S1 motif domain.

Belongs to the polyribonucleotide nucleotidyltransferase family. In terms of assembly, component of the RNA degradosome, which is a multiprotein complex involved in RNA processing and mRNA degradation. Requires Mg(2+) as cofactor.

It is found in the cytoplasm. It carries out the reaction RNA(n+1) + phosphate = RNA(n) + a ribonucleoside 5'-diphosphate. Involved in mRNA degradation. Catalyzes the phosphorolysis of single-stranded polyribonucleotides processively in the 3'- to 5'-direction. The protein is Polyribonucleotide nucleotidyltransferase of Pseudomonas syringae pv. syringae (strain B728a).